The chain runs to 130 residues: Lipoprotein LpqS (130 aa).

An N-terminal signal peptide occupies residues 1-23 (MVWMRSAIVAVALGVTVAAVAAA). Cys-24 carries the N-palmitoyl cysteine lipid modification. The S-diacylglycerol cysteine moiety is linked to residue Cys-24.

The protein localises to the cell membrane. May play an essential role in M.tuberculosis replication and survival inside the host cell. This Mycobacterium tuberculosis (strain ATCC 25618 / H37Rv) protein is Lipoprotein LpqS.